The following is a 142-amino-acid chain: Hemoglobin subunit alpha-A (142 aa).

The Globin domain maps to 2 to 142 (VLTAGDKANV…VATALTSKYR (141 aa)). Positions 59 and 88 each coordinate heme b.

It belongs to the globin family. Heterotetramer of two alpha-A chains and two beta chains. Red blood cells.

Functionally, involved in oxygen transport from the lung to the various peripheral tissues. This Chelonoidis niger (Galapagos giant tortoise) protein is Hemoglobin subunit alpha-A.